A 334-amino-acid chain; its full sequence is Probable prephenate dehydratase (334 aa).

A Prephenate dehydratase domain is found at Arg-7 to Arg-224. The 79-residue stretch at Leu-244–Trp-322 folds into the ACT domain.

It is found in the cytoplasm. The enzyme catalyses prephenate + H(+) = 3-phenylpyruvate + CO2 + H2O. It participates in amino-acid biosynthesis; L-phenylalanine biosynthesis; phenylpyruvate from prephenate: step 1/1. Its function is as follows. Catayzes the decarboxylation/dehydration of prephenate to phenylpyruvate. In Saccharomyces cerevisiae (strain ATCC 204508 / S288c) (Baker's yeast), this protein is Probable prephenate dehydratase (PHA2).